Consider the following 321-residue polypeptide: Lipoyl synthase (321 aa).

Residues Cys-60, Cys-65, Cys-71, Cys-86, Cys-90, Cys-93, and Ser-299 each contribute to the [4Fe-4S] cluster site. The region spanning Trp-72–Leu-288 is the Radical SAM core domain.

It belongs to the radical SAM superfamily. Lipoyl synthase family. [4Fe-4S] cluster serves as cofactor.

The protein localises to the cytoplasm. The catalysed reaction is [[Fe-S] cluster scaffold protein carrying a second [4Fe-4S](2+) cluster] + N(6)-octanoyl-L-lysyl-[protein] + 2 oxidized [2Fe-2S]-[ferredoxin] + 2 S-adenosyl-L-methionine + 4 H(+) = [[Fe-S] cluster scaffold protein] + N(6)-[(R)-dihydrolipoyl]-L-lysyl-[protein] + 4 Fe(3+) + 2 hydrogen sulfide + 2 5'-deoxyadenosine + 2 L-methionine + 2 reduced [2Fe-2S]-[ferredoxin]. It functions in the pathway protein modification; protein lipoylation via endogenous pathway; protein N(6)-(lipoyl)lysine from octanoyl-[acyl-carrier-protein]: step 2/2. Functionally, catalyzes the radical-mediated insertion of two sulfur atoms into the C-6 and C-8 positions of the octanoyl moiety bound to the lipoyl domains of lipoate-dependent enzymes, thereby converting the octanoylated domains into lipoylated derivatives. The chain is Lipoyl synthase from Brucella anthropi (strain ATCC 49188 / DSM 6882 / CCUG 24695 / JCM 21032 / LMG 3331 / NBRC 15819 / NCTC 12168 / Alc 37) (Ochrobactrum anthropi).